A 1442-amino-acid polypeptide reads, in one-letter code: Sulfite reductase [NADPH] subunit beta (1442 aa).

The 150-residue stretch at 682-831 (LHVYYASDGG…AYSEWEPKLW (150 aa)) folds into the Flavodoxin-like domain. Ser903 carries the post-translational modification Phosphoserine. [4Fe-4S] cluster-binding residues include Cys1300, Cys1306, Cys1345, and Cys1349. Residue Cys1349 coordinates siroheme.

It belongs to the nitrite and sulfite reductase 4Fe-4S domain family. In terms of assembly, alpha(2)-beta(2). The alpha component is a flavoprotein, the beta component is a hemoprotein. Requires siroheme as cofactor. [4Fe-4S] cluster serves as cofactor.

The protein localises to the cytoplasm. It carries out the reaction hydrogen sulfide + 3 NADP(+) + 3 H2O = sulfite + 3 NADPH + 4 H(+). The protein operates within sulfur metabolism; hydrogen sulfide biosynthesis; hydrogen sulfide from sulfite (NADPH route): step 1/1. Catalyzes the reduction of sulfite to sulfide, one of several activities required for the biosynthesis of L-cysteine from sulfate. This chain is Sulfite reductase [NADPH] subunit beta (MET5), found in Saccharomyces cerevisiae (strain ATCC 204508 / S288c) (Baker's yeast).